We begin with the raw amino-acid sequence, 508 residues long: Histidine ammonia-lyase (508 aa).

Residues 141 to 143 (ASG) constitute a cross-link (5-imidazolinone (Ala-Gly)). At serine 142 the chain carries 2,3-didehydroalanine (Ser).

This sequence belongs to the PAL/histidase family. In terms of processing, contains an active site 4-methylidene-imidazol-5-one (MIO), which is formed autocatalytically by cyclization and dehydration of residues Ala-Ser-Gly.

Its subcellular location is the cytoplasm. The catalysed reaction is L-histidine = trans-urocanate + NH4(+). The protein operates within amino-acid degradation; L-histidine degradation into L-glutamate; N-formimidoyl-L-glutamate from L-histidine: step 1/3. The protein is Histidine ammonia-lyase of Geobacillus sp. (strain WCH70).